A 318-amino-acid chain; its full sequence is Methionyl-tRNA formyltransferase (318 aa).

117–120 provides a ligand contact to (6S)-5,6,7,8-tetrahydrofolate; that stretch reads SLLP.

It belongs to the Fmt family.

The enzyme catalyses L-methionyl-tRNA(fMet) + (6R)-10-formyltetrahydrofolate = N-formyl-L-methionyl-tRNA(fMet) + (6S)-5,6,7,8-tetrahydrofolate + H(+). Functionally, attaches a formyl group to the free amino group of methionyl-tRNA(fMet). The formyl group appears to play a dual role in the initiator identity of N-formylmethionyl-tRNA by promoting its recognition by IF2 and preventing the misappropriation of this tRNA by the elongation apparatus. The polypeptide is Methionyl-tRNA formyltransferase (Malacoplasma penetrans (strain HF-2) (Mycoplasma penetrans)).